A 239-amino-acid polypeptide reads, in one-letter code: Putative 3-methyladenine DNA glycosylase (239 aa).

It belongs to the DNA glycosylase MPG family.

This chain is Putative 3-methyladenine DNA glycosylase, found in Pseudomonas aeruginosa (strain ATCC 15692 / DSM 22644 / CIP 104116 / JCM 14847 / LMG 12228 / 1C / PRS 101 / PAO1).